The primary structure comprises 192 residues: Orotate phosphoribosyltransferase (192 aa).

116 to 124 (EDIVTTGLS) lines the 5-phospho-alpha-D-ribose 1-diphosphate pocket. The orotate site is built by Thr-120 and Arg-148.

It belongs to the purine/pyrimidine phosphoribosyltransferase family. PyrE subfamily. As to quaternary structure, homodimer. Requires Mg(2+) as cofactor.

It catalyses the reaction orotidine 5'-phosphate + diphosphate = orotate + 5-phospho-alpha-D-ribose 1-diphosphate. It functions in the pathway pyrimidine metabolism; UMP biosynthesis via de novo pathway; UMP from orotate: step 1/2. Functionally, catalyzes the transfer of a ribosyl phosphate group from 5-phosphoribose 1-diphosphate to orotate, leading to the formation of orotidine monophosphate (OMP). The polypeptide is Orotate phosphoribosyltransferase (Bartonella henselae (strain ATCC 49882 / DSM 28221 / CCUG 30454 / Houston 1) (Rochalimaea henselae)).